A 485-amino-acid polypeptide reads, in one-letter code: Rhamnulokinase (485 aa).

8–12 (ASSGR) is a binding site for ATP. Residues glycine 78 and 231 to 233 (HDT) contribute to the substrate site. The active-site Proton acceptor is aspartate 232. Position 254 (threonine 254) interacts with ATP. A substrate-binding site is contributed by asparagine 291. Glutamine 299 contributes to the ATP binding site. Cysteine 348 and cysteine 365 are joined by a disulfide. Residue glycine 397 participates in ATP binding. Cysteines 408 and 412 form a disulfide.

Belongs to the rhamnulokinase family. The cofactor is Mg(2+).

It carries out the reaction L-rhamnulose + ATP = L-rhamnulose 1-phosphate + ADP + H(+). Its pathway is carbohydrate degradation; L-rhamnose degradation; glycerone phosphate from L-rhamnose: step 2/3. Functionally, involved in the catabolism of L-rhamnose (6-deoxy-L-mannose). Catalyzes the transfer of the gamma-phosphate group from ATP to the 1-hydroxyl group of L-rhamnulose to yield L-rhamnulose 1-phosphate. This Yersinia pestis bv. Antiqua (strain Antiqua) protein is Rhamnulokinase.